Consider the following 630-residue polypeptide: Cytochrome B pre-mRNA-processing protein 2 (630 aa).

The protein localises to the mitochondrion. Functionally, appears to be specifically required for the splicing of the terminal intron (bI5) of the cytochrome b pre-mRNA. Can also stimulates the splicing of the omega intron of the precursor of large ribosomal RNA. This Saccharomyces cerevisiae (strain ATCC 204508 / S288c) (Baker's yeast) protein is Cytochrome B pre-mRNA-processing protein 2 (CBP2).